Consider the following 354-residue polypeptide: DNA polymerase IV (354 aa).

The region spanning 14-198 (IIHIDMDAFF…MDIAKFHGVG (185 aa)) is the UmuC domain. Positions 18 and 116 each coordinate Mg(2+). The active site involves Glu-117.

Belongs to the DNA polymerase type-Y family. In terms of assembly, monomer. The cofactor is Mg(2+).

Its subcellular location is the cytoplasm. It catalyses the reaction DNA(n) + a 2'-deoxyribonucleoside 5'-triphosphate = DNA(n+1) + diphosphate. Functionally, poorly processive, error-prone DNA polymerase involved in untargeted mutagenesis. Copies undamaged DNA at stalled replication forks, which arise in vivo from mismatched or misaligned primer ends. These misaligned primers can be extended by PolIV. Exhibits no 3'-5' exonuclease (proofreading) activity. May be involved in translesional synthesis, in conjunction with the beta clamp from PolIII. This is DNA polymerase IV from Streptococcus sanguinis (strain SK36).